We begin with the raw amino-acid sequence, 610 residues long: Aspercryptin biosynthesis cluster-specific transcription regulator atnN (610 aa).

Over residues 1 to 26 (MAPKDSQVSASNEMTGNPPSSVQGRS) the composition is skewed to polar residues. The tract at residues 1 to 27 (MAPKDSQVSASNEMTGNPPSSVQGRSR) is disordered. A DNA-binding region (zn(2)-C6 fungal-type) is located at residues 30 to 57 (CITCRIRRVKCDEERPHCRRCQSTGRKC). Disordered stretches follow at residues 61-81 (TPLT…KAGS) and 427-493 (AGST…LPRP). Composition is skewed to low complexity over residues 66 to 79 (QQPK…AAKA) and 437 to 474 (SRAG…TPTP).

The protein resides in the nucleus. Transcription factor that positively regulates the cluster that mediate the production of aspercryptins, linear lipopeptides built from six amino acids including 2 highly unusual and nonproteogenic amino acids, 2-amino-octanoic acid (2aoa) and 2-amino-dodecanol (2adol). This Emericella nidulans (strain FGSC A4 / ATCC 38163 / CBS 112.46 / NRRL 194 / M139) (Aspergillus nidulans) protein is Aspercryptin biosynthesis cluster-specific transcription regulator atnN.